The chain runs to 545 residues: Chaperonin GroEL 2 (545 aa).

Residues 29–32 (TLGP), 86–90 (DGTTT), G413, 479–481 (NAA), and D495 each bind ATP.

It belongs to the chaperonin (HSP60) family. Forms a cylinder of 14 subunits composed of two heptameric rings stacked back-to-back. Interacts with the co-chaperonin GroES.

The protein resides in the cytoplasm. The catalysed reaction is ATP + H2O + a folded polypeptide = ADP + phosphate + an unfolded polypeptide.. In terms of biological role, together with its co-chaperonin GroES, plays an essential role in assisting protein folding. The GroEL-GroES system forms a nano-cage that allows encapsulation of the non-native substrate proteins and provides a physical environment optimized to promote and accelerate protein folding. This Prochlorococcus marinus (strain AS9601) protein is Chaperonin GroEL 2.